Here is a 97-residue protein sequence, read N- to C-terminus: Cell division topological specificity factor (97 aa).

The protein belongs to the MinE family.

Prevents the cell division inhibition by proteins MinC and MinD at internal division sites while permitting inhibition at polar sites. This ensures cell division at the proper site by restricting the formation of a division septum at the midpoint of the long axis of the cell. The chain is Cell division topological specificity factor from Rhodospirillum centenum (strain ATCC 51521 / SW).